Here is a 338-residue protein sequence, read N- to C-terminus: MQRRQLLQSMGGLAASTMPFSLAFAQTSALKISHQFPGGTIKEGDFRDRLVRNFAAEVEKRSKGAMKFEIYPGSSLMKTNAQFSSMRKGALDMALIPLSYAGGEVPELNIGLMPGLVVSYEQAYSWKTKPVGIELTRVLQEKGIVLISWIWQAGGVASRGKPVVEPEDAKGMKIRGGSREMDMILKDAGAAVVSLPSNEIYAAMQTGAMDAAMTSSTSFISFRLEEVAKALTTGRTGAYWFMFEPLMMSKAIFDKLPKDQRDMLMTVGAEMEKFALEAAKKDDIDVAAVYQKAGAKVVDLSDGTIKKWQDIARKTAWKDYGAKNEGCAKLLALAQQTL.

The first 25 residues, 1–25 (MQRRQLLQSMGGLAASTMPFSLAFA), serve as a signal peptide directing secretion. Malonate-binding positions include Arg47, Tyr100, Arg175, Ser197, 214–218 (TSSTS), and Glu244.

It belongs to the bacterial solute-binding protein 7 family. As to quaternary structure, the complex is comprised of an extracytoplasmic solute-binding protein and a heteromeric permease formed by two transmembrane proteins.

It is found in the periplasm. Functionally, solute-binding protein that binds malonate (in vitro). Probably part of a tripartite ATP-independent periplasmic (TRAP) transport system that mediates solute transport into the cytoplasm. This Albidiferax ferrireducens (strain ATCC BAA-621 / DSM 15236 / T118) (Rhodoferax ferrireducens) protein is Solute-binding protein Rfer_1840.